Here is a 499-residue protein sequence, read N- to C-terminus: Signal recognition particle subunit SRP54 2 (499 aa).

Residues 1–295 (MVLAELGGSI…DVKPFVSRLL (295 aa)) form a G-domain region. Residues 108–115 (GLQGSGKT), 190–194 (DTSGR), and 248–251 (TKMD) each bind GTP. Residues 296–499 (GMGDWSGFMD…MGGMFGGGDK (204 aa)) are M-domain.

Belongs to the GTP-binding SRP family. SRP54 subfamily. In terms of assembly, component of a signal recognition particle (SRP) complex that consists of a 7SL RNA molecule of 300 nucleotides and six protein subunits: SRP72, SRP68, SRP54, SRP19, SRP14 and SRP9.

It localises to the cytoplasm. It is found in the endoplasmic reticulum. The enzyme catalyses GTP + H2O = GDP + phosphate + H(+). In terms of biological role, component of the signal recognition particle (SRP) complex, a ribonucleoprotein complex that mediates the cotranslational targeting of secretory and membrane proteins to the endoplasmic reticulum (ER). As part of the SRP complex, associates with the SRP receptor (SR) component SRPRA to target secretory proteins to the endoplasmic reticulum membrane. Binds to the signal sequence of presecretory proteins when they emerge from the ribosomes. Displays basal GTPase activity, and stimulates reciprocal GTPase activation of the SR subunit SRPRA. Forms a guanosine 5'-triphosphate (GTP)-dependent complex with the SR subunit SRPRA. SR compaction and GTPase mediated rearrangement of SR drive SRP-mediated cotranslational protein translocation into the ER. Requires the presence of SRP9/SRP14 and/or SRP19 to stably interact with RNA. This chain is Signal recognition particle subunit SRP54 2, found in Solanum lycopersicum (Tomato).